Here is a 315-residue protein sequence, read N- to C-terminus: Small ribosomal subunit protein uS2 (315 aa).

The disordered stretch occupies residues 250–315; it reads LLEQGDAAKA…TESEKAPVSE (66 aa). Basic and acidic residues-rich tracts occupy residues 272 to 282 and 297 to 315; these read VSAKNEAKSED and TEAK…PVSE.

This sequence belongs to the universal ribosomal protein uS2 family.

In Clavibacter michiganensis subsp. michiganensis (strain NCPPB 382), this protein is Small ribosomal subunit protein uS2.